The chain runs to 346 residues: Protein RecA (346 aa).

67 to 74 is an ATP binding site; it reads GPESSGKT.

Belongs to the RecA family.

It localises to the cytoplasm. Its function is as follows. Can catalyze the hydrolysis of ATP in the presence of single-stranded DNA, the ATP-dependent uptake of single-stranded DNA by duplex DNA, and the ATP-dependent hybridization of homologous single-stranded DNAs. It interacts with LexA causing its activation and leading to its autocatalytic cleavage. This is Protein RecA from Saccharopolyspora erythraea (strain ATCC 11635 / DSM 40517 / JCM 4748 / NBRC 13426 / NCIMB 8594 / NRRL 2338).